The sequence spans 741 residues: Zinc finger protein 425 (741 aa).

In terms of domain architecture, KRAB spans 1–69; the sequence is DDVALYFSGQ…EQGCLDKTRR (69 aa). Disordered stretches follow at residues 67-86 and 128-169; these read TRRT…DTGK and RRDT…TPGR. Residues 132–151 are compositionally biased toward polar residues; the sequence is FQSPSLQETEIPNKKVSITA. The span at 153 to 168 shows a compositional bias: basic and acidic residues; sequence DPDKKDLRHKPRETPG. 19 consecutive C2H2-type zinc fingers follow at residues 179–201, 235–257, 263–285, 291–313, 319–341, 347–369, 375–397, 403–425, 431–453, 459–481, 487–509, 515–537, 543–565, 571–593, 599–621, 627–649, 655–677, 683–705, and 711–733; these read YSCY…KRSH, FQCS…QVVH, YPCP…LCLH, FCCG…LRLH, FQCP…LSQH, FHCP…QRTH, FSCD…IRVH, FSCP…GLQH, FQCP…QRLH, FPCA…TRVH, FPCG…LKVH, FSCA…TRLH, FQCP…QRMH, FACS…LRLH, YQCP…LLQH, FSCV…IRVH, FQCP…LYTH, FQCP…LCLH, and FSCD…IAVH.

The protein belongs to the krueppel C2H2-type zinc-finger protein family.

Its subcellular location is the nucleus. The protein resides in the cytoplasm. Acts as a transcriptional repressor. This chain is Zinc finger protein 425 (ZNF425), found in Macaca fascicularis (Crab-eating macaque).